The sequence spans 185 residues: AP-3 complex subunit sigma (185 aa).

The protein belongs to the adaptor complexes small subunit family. As to quaternary structure, adaptor protein complex 3 (AP-3) is a heterotetramer composed of 2 large adaptins (APL5 and APL6), a medium adaptin (APM3) and a small adaptin (APS3).

The protein resides in the golgi apparatus. It localises to the cytoplasmic vesicle membrane. Its function is as follows. Part of the AP-3 complex, an adaptor-related complex which is not clathrin-associated. The complex is associated with the Golgi region as well as more peripheral structures. It facilitates the budding of vesicles from the Golgi membrane and may be directly involved in trafficking to the vacuole. This chain is AP-3 complex subunit sigma (APS3), found in Eremothecium gossypii (strain ATCC 10895 / CBS 109.51 / FGSC 9923 / NRRL Y-1056) (Yeast).